The primary structure comprises 439 residues: Eukaryotic translation initiation factor 2 subunit gamma (439 aa).

The tr-type G domain occupies 11–215 (QATLNIGTIG…FIVNYIPEPV (205 aa)). The segment at 20–27 (GHVAHGKS) is G1. 23–28 (AHGKST) provides a ligand contact to GTP. The tract at residues 48 to 52 (NITIK) is G2. Positions 103–106 (DCPG) are G3. Residues 159-162 (NKID) and 193-195 (AAQ) contribute to the GTP site. The G4 stretch occupies residues 159–162 (NKID). Residues 193-195 (AAQ) form a G5 region. Residues 415 to 427 (GEIKDGTCIEPEY) form an interacts with CDC123 region.

Belongs to the TRAFAC class translation factor GTPase superfamily. Classic translation factor GTPase family. EIF2G subfamily. Eukaryotic translation initiation factor 2 eIF2 is a heterotrimeric complex composed of an alpha, a beta and a gamma subunit. The factors eIF-1, eIF-2, eIF-3, TIF5/eIF-5 and methionyl-tRNAi form a multifactor complex (MFC) that may bind to the 40S ribosome.

It localises to the cytoplasm. It is found in the cytosol. The enzyme catalyses GTP + H2O = GDP + phosphate + H(+). As a subunit of eukaryotic initiation factor 2 eIF2, involved in the early steps of protein synthesis. In the presence of GTP, eIF-2 forms a ternary complex with initiator tRNA Met-tRNAi and then recruits the 40S ribosomal complex and initiation factors eIF-1, eIF-1A and eIF-3 to form the 43S pre-initiation complex (43S PIC), a step that determines the rate of protein translation. The 43S PIC binds to mRNA and scans downstream to the initiation codon, where it forms a 48S initiation complex by codon-anticodon base pairing. This leads to the displacement of eIF-1 to allow GTPase-activating protein (GAP) eIF-5-mediated hydrolysis of eIF2-bound GTP. Hydrolysis of GTP and release of Pi, which makes GTP hydrolysis irreversible, causes the release of the eIF-2-GDP binary complex from the 40S subunit, an event that is essential for the subsequent joining of the 60S ribosomal subunit to form an elongation-competent 80S ribosome. In order for eIF-2 to recycle and catalyze another round of initiation, the GDP bound to eIF-2 must be exchanged with GTP by way of a reaction catalyzed by GDP-GTP exchange factor (GEF) eIF-2B. In Encephalitozoon cuniculi (strain GB-M1) (Microsporidian parasite), this protein is Eukaryotic translation initiation factor 2 subunit gamma.